The chain runs to 118 residues: MICOS complex subunit MIC13 (118 aa).

Topologically, residues 1-7 (MVPRVWS) are mitochondrial matrix. A helical membrane pass occupies residues 8–26 (LMRFLIKGSVAGGAIYLVY). At 27 to 118 (DQDPLGPSDK…GWEYLKERTK (92 aa)) the chain is on the mitochondrial intermembrane side.

It belongs to the MICOS complex subunit Mic13 family. As to quaternary structure, component of the mitochondrial contact site and cristae organizing system (MICOS) complex, composed of at least MICOS10/MIC10, CHCHD3/MIC19, CHCHD6/MIC25, APOO/MIC26, MICOS13/MIC13, APOOL/MIC27 and IMMT/MIC60. The MICOS complex associates with mitochondrial outer membrane proteins SAMM50, MTX1 and MTX2 (together described as components of the mitochondrial outer membrane sorting assembly machinery (SAM) complex) and DNAJC11, mitochondrial inner membrane protein TMEM11 and with HSPA9. The MICOS and SAM complexes together with DNAJC11 are part of a large protein complex spanning both membranes termed the mitochondrial intermembrane space bridging (MIB) complex.

Its subcellular location is the mitochondrion inner membrane. Its function is as follows. Component of the MICOS complex, a large protein complex of the mitochondrial inner membrane that plays crucial roles in the maintenance of crista junctions, inner membrane architecture, and formation of contact sites to the outer membrane. Constituent of mature MICOS complex, it is required for the formation of cristae junction (CJ) and maintenance of cristae morphology. Required for the incorporation of MICOS10/MIC10 into the MICOS complex. The polypeptide is MICOS complex subunit MIC13 (Sus scrofa (Pig)).